Consider the following 334-residue polypeptide: Holliday junction branch migration complex subunit RuvB (334 aa).

The interval 1–182 (MDERLVSTEA…FGVHARLEYY (182 aa)) is large ATPase domain (RuvB-L). ATP contacts are provided by residues L21, R22, G63, K66, T67, T68, 129–131 (EDF), R172, Y182, and R219. Mg(2+) is bound at residue T67. The interval 183-253 (EQRDLAHIVS…IAEDALERLQ (71 aa)) is small ATPAse domain (RuvB-S). Residues 256–334 (KLGLDHIDHK…HFQMEVPIRD (79 aa)) form a head domain (RuvB-H) region. DNA is bound by residues R311 and R316.

This sequence belongs to the RuvB family. In terms of assembly, homohexamer. Forms an RuvA(8)-RuvB(12)-Holliday junction (HJ) complex. HJ DNA is sandwiched between 2 RuvA tetramers; dsDNA enters through RuvA and exits via RuvB. An RuvB hexamer assembles on each DNA strand where it exits the tetramer. Each RuvB hexamer is contacted by two RuvA subunits (via domain III) on 2 adjacent RuvB subunits; this complex drives branch migration. In the full resolvosome a probable DNA-RuvA(4)-RuvB(12)-RuvC(2) complex forms which resolves the HJ.

The protein localises to the cytoplasm. It catalyses the reaction ATP + H2O = ADP + phosphate + H(+). The RuvA-RuvB-RuvC complex processes Holliday junction (HJ) DNA during genetic recombination and DNA repair, while the RuvA-RuvB complex plays an important role in the rescue of blocked DNA replication forks via replication fork reversal (RFR). RuvA specifically binds to HJ cruciform DNA, conferring on it an open structure. The RuvB hexamer acts as an ATP-dependent pump, pulling dsDNA into and through the RuvAB complex. RuvB forms 2 homohexamers on either side of HJ DNA bound by 1 or 2 RuvA tetramers; 4 subunits per hexamer contact DNA at a time. Coordinated motions by a converter formed by DNA-disengaged RuvB subunits stimulates ATP hydrolysis and nucleotide exchange. Immobilization of the converter enables RuvB to convert the ATP-contained energy into a lever motion, pulling 2 nucleotides of DNA out of the RuvA tetramer per ATP hydrolyzed, thus driving DNA branch migration. The RuvB motors rotate together with the DNA substrate, which together with the progressing nucleotide cycle form the mechanistic basis for DNA recombination by continuous HJ branch migration. Branch migration allows RuvC to scan DNA until it finds its consensus sequence, where it cleaves and resolves cruciform DNA. In Bacillus pumilus (strain SAFR-032), this protein is Holliday junction branch migration complex subunit RuvB.